The sequence spans 138 residues: Ribosome-binding factor A (138 aa).

The interval 117–138 (AEDGQHQEGPASADAKPESTEE) is disordered.

This sequence belongs to the RbfA family. In terms of assembly, monomer. Binds 30S ribosomal subunits, but not 50S ribosomal subunits or 70S ribosomes.

It is found in the cytoplasm. In terms of biological role, one of several proteins that assist in the late maturation steps of the functional core of the 30S ribosomal subunit. Associates with free 30S ribosomal subunits (but not with 30S subunits that are part of 70S ribosomes or polysomes). Required for efficient processing of 16S rRNA. May interact with the 5'-terminal helix region of 16S rRNA. The chain is Ribosome-binding factor A from Pseudomonas syringae pv. syringae (strain B728a).